Here is a 626-residue protein sequence, read N- to C-terminus: Ankyrin repeat domain-containing protein 55 (626 aa).

ANK repeat units follow at residues 25–54, 59–88, 92–124, 125–156, 160–189, 193–222, 229–259, 263–292, and 296–325; these read VDLAMVYQAASNGDVNSLTSVIREDPSILE, EGCTPLMHAVSGRQVDTVKLLLKMGANINT, YGRTSLCLATYLGWLEGCVSLLRNGAKHNIPDK, NGRLPLHAATAEPDVRLLIVLLQQSSLSEINH, EGMTPLHWAAFHNRPQHTQMLLKKGADPTL, DFKTALHWAVQSGNRILCSIILSHRQGPSI, SGKTCVHIAAASGFGDIINDLAKVPECNLQA, DDRTPLHWAAASGKAECVQSLLDLGMDSNL, and NESTPLAYALYCGHTACVRLLSREGRAEPA. Basic and acidic residues predominate over residues 354 to 372; the sequence is KEEQKAHQKDQSRARPKEE. Disordered regions lie at residues 354–377, 455–491, and 522–626; these read KEEQKAHQKDQSRARPKEEETSEV, HAGLNAGPQHTAQRSQKSRSEQDLLNNRTGCPVSLEN, and QPGH…HDEN. A Phosphoserine modification is found at Ser-474. The segment covering 604–614 has biased composition (basic and acidic residues); it reads QRGHDPPRAEE. Polar residues predominate over residues 616–626; sequence GGSSSPTHDEN.

This chain is Ankyrin repeat domain-containing protein 55 (Ankrd55), found in Mus musculus (Mouse).